The sequence spans 269 residues: Tryptophan synthase alpha chain (269 aa).

Active-site proton acceptor residues include Glu49 and Asp60.

Belongs to the TrpA family. In terms of assembly, tetramer of two alpha and two beta chains.

The enzyme catalyses (1S,2R)-1-C-(indol-3-yl)glycerol 3-phosphate + L-serine = D-glyceraldehyde 3-phosphate + L-tryptophan + H2O. It participates in amino-acid biosynthesis; L-tryptophan biosynthesis; L-tryptophan from chorismate: step 5/5. Its function is as follows. The alpha subunit is responsible for the aldol cleavage of indoleglycerol phosphate to indole and glyceraldehyde 3-phosphate. This Klebsiella aerogenes (Enterobacter aerogenes) protein is Tryptophan synthase alpha chain.